We begin with the raw amino-acid sequence, 492 residues long: UTP--glucose-1-phosphate uridylyltransferase (492 aa).

Residues L110 to G113, K124, Q183, and G210 each bind UTP. Residue G112–G113 participates in substrate binding. Position 124 (K124) interacts with Mg(2+). Substrate is bound by residues H211 and N239–D241. UTP-binding residues include D241 and K379. D241 contributes to the Mg(2+) binding site. K379 is an active-site residue. Residues V441–H492 form an oligomerization region.

Belongs to the UDPGP type 1 family. As to quaternary structure, homooctamer.

The enzyme catalyses alpha-D-glucose 1-phosphate + UTP + H(+) = UDP-alpha-D-glucose + diphosphate. In terms of biological role, plays a central role as a glucosyl donor in cellular metabolic pathways. The polypeptide is UTP--glucose-1-phosphate uridylyltransferase (UGP1) (Encephalitozoon cuniculi (strain GB-M1) (Microsporidian parasite)).